The sequence spans 52 residues: Large ribosomal subunit protein bL32c (52 aa).

The protein belongs to the bacterial ribosomal protein bL32 family.

It localises to the plastid. It is found in the chloroplast. The polypeptide is Large ribosomal subunit protein bL32c (Lobularia maritima (Sweet alyssum)).